We begin with the raw amino-acid sequence, 237 residues long: Pyridoxine 5'-phosphate synthase (237 aa).

N7 and R18 together coordinate 3-amino-2-oxopropyl phosphate. The active-site Proton acceptor is the H43. Residues R45 and H50 each contribute to the 1-deoxy-D-xylulose 5-phosphate site. The active-site Proton acceptor is E70. T100 provides a ligand contact to 1-deoxy-D-xylulose 5-phosphate. H190 serves as the catalytic Proton donor. 3-amino-2-oxopropyl phosphate-binding positions include D191 and 213–214 (GH).

The protein belongs to the PNP synthase family. As to quaternary structure, homooctamer; tetramer of dimers.

The protein localises to the cytoplasm. The catalysed reaction is 3-amino-2-oxopropyl phosphate + 1-deoxy-D-xylulose 5-phosphate = pyridoxine 5'-phosphate + phosphate + 2 H2O + H(+). It participates in cofactor biosynthesis; pyridoxine 5'-phosphate biosynthesis; pyridoxine 5'-phosphate from D-erythrose 4-phosphate: step 5/5. Its function is as follows. Catalyzes the complicated ring closure reaction between the two acyclic compounds 1-deoxy-D-xylulose-5-phosphate (DXP) and 3-amino-2-oxopropyl phosphate (1-amino-acetone-3-phosphate or AAP) to form pyridoxine 5'-phosphate (PNP) and inorganic phosphate. The protein is Pyridoxine 5'-phosphate synthase of Bacteroides thetaiotaomicron (strain ATCC 29148 / DSM 2079 / JCM 5827 / CCUG 10774 / NCTC 10582 / VPI-5482 / E50).